We begin with the raw amino-acid sequence, 112 residues long: MSVWICLVFASLLSCAGQLCQKQATRPSRRGRRSRHILFWLGMALLCLGCGMLLWLSVLQSIPVSIAYPMLSLNFVWVTLAGWGIWHEPVARRHWLGVGLIVVGIVILGTSV.

The EamA domain maps to 35-110; it reads RHILFWLGMA…IVVGIVILGT (76 aa). A run of 3 helical transmembrane segments spans residues 37-57, 66-86, and 89-109; these read ILFW…LWLS, IAYP…WGIW, and PVAR…VILG.

It belongs to the ArnE family. In terms of assembly, heterodimer of ArnE and ArnF.

The protein localises to the cell inner membrane. It functions in the pathway bacterial outer membrane biogenesis; lipopolysaccharide biosynthesis. In terms of biological role, translocates 4-amino-4-deoxy-L-arabinose-phosphoundecaprenol (alpha-L-Ara4N-phosphoundecaprenol) from the cytoplasmic to the periplasmic side of the inner membrane. The polypeptide is Probable 4-amino-4-deoxy-L-arabinose-phosphoundecaprenol flippase subunit ArnE (Klebsiella pneumoniae (strain 342)).